Here is a 245-residue protein sequence, read N- to C-terminus: tRNA1(Val) (adenine(37)-N6)-methyltransferase (245 aa).

Belongs to the methyltransferase superfamily. tRNA (adenine-N(6)-)-methyltransferase family.

It localises to the cytoplasm. The catalysed reaction is adenosine(37) in tRNA1(Val) + S-adenosyl-L-methionine = N(6)-methyladenosine(37) in tRNA1(Val) + S-adenosyl-L-homocysteine + H(+). Its function is as follows. Specifically methylates the adenine in position 37 of tRNA(1)(Val) (anticodon cmo5UAC). The sequence is that of tRNA1(Val) (adenine(37)-N6)-methyltransferase (yfiC) from Escherichia coli (strain K12).